We begin with the raw amino-acid sequence, 462 residues long: TNF receptor-associated factor family protein DDB_G0267754 (462 aa).

The segment at 24–62 adopts an RING-type; degenerate zinc-finger fold; sequence CCVCECLLIEALQCRNGHVACKNCFIKIVKSKKECMTCR. The interval 104 to 127 is disordered; sequence KNGNGNEGSSANEIEQPQQPQQQQ. TRAF-type zinc fingers lie at residues 150-217 and 214-273; these read SHLK…SHTE and SHTE…NQLA. One can recognise an MATH domain in the interval 326-449; that stretch reads MFRGKWVISN…NDTLTINFSI (124 aa).

The protein belongs to the TNF receptor-associated factor family. A subfamily.

Its subcellular location is the cytoplasm. Probable adapter protein and signal transducer that links members of the tumor necrosis factor receptor family to different signaling pathways by association with the receptor cytoplasmic domain and kinases. This is TNF receptor-associated factor family protein DDB_G0267754 from Dictyostelium discoideum (Social amoeba).